Consider the following 930-residue polypeptide: Translation initiation factor IF-2 (930 aa).

The span at 50-67 (FKPAAAPKVEAKPAAPKV) shows a compositional bias: low complexity. 2 disordered regions span residues 50–217 (FKPA…SSEE) and 260–346 (EVVP…HELP). 2 stretches are compositionally biased toward basic and acidic residues: residues 68–90 (SAEK…EAKP) and 110–125 (FKAE…AERR). The span at 129-141 (KGNNRDQQQNGNR) shows a compositional bias: low complexity. Composition is skewed to basic and acidic residues over residues 157–167 (RDNRRFNDQAK) and 262–295 (VPEK…DGPR). The span at 309–318 (NQKNSNWNNN) shows a compositional bias: low complexity. Over residues 337–346 (VTERKFHELP) the composition is skewed to basic and acidic residues. The tr-type G domain occupies 432-599 (ERPPVVTIMG…TVLLVAEIQE (168 aa)). A G1 region spans residues 441–448 (GHVDHGKT). 441 to 448 (GHVDHGKT) contributes to the GTP binding site. Residues 466–470 (GITQH) are G2. Positions 487 to 490 (DTPG) are G3. GTP contacts are provided by residues 487–491 (DTPGH) and 541–544 (NKID). Positions 541–544 (NKID) are G4. Positions 577–579 (SAK) are G5.

It belongs to the TRAFAC class translation factor GTPase superfamily. Classic translation factor GTPase family. IF-2 subfamily.

It is found in the cytoplasm. One of the essential components for the initiation of protein synthesis. Protects formylmethionyl-tRNA from spontaneous hydrolysis and promotes its binding to the 30S ribosomal subunits. Also involved in the hydrolysis of GTP during the formation of the 70S ribosomal complex. The polypeptide is Translation initiation factor IF-2 (Streptococcus pneumoniae (strain P1031)).